Consider the following 177-residue polypeptide: Protein GrpE (177 aa).

The segment at 1 to 26 is disordered; that stretch reads MSEEIKKDDLQEEVEATETEETVEEV. Positions 10-26 are enriched in acidic residues; sequence LQEEVEATETEETVEEV.

It belongs to the GrpE family. As to quaternary structure, homodimer.

The protein localises to the cytoplasm. In terms of biological role, participates actively in the response to hyperosmotic and heat shock by preventing the aggregation of stress-denatured proteins, in association with DnaK and GrpE. It is the nucleotide exchange factor for DnaK and may function as a thermosensor. Unfolded proteins bind initially to DnaJ; upon interaction with the DnaJ-bound protein, DnaK hydrolyzes its bound ATP, resulting in the formation of a stable complex. GrpE releases ADP from DnaK; ATP binding to DnaK triggers the release of the substrate protein, thus completing the reaction cycle. Several rounds of ATP-dependent interactions between DnaJ, DnaK and GrpE are required for fully efficient folding. The chain is Protein GrpE from Streptococcus agalactiae serotype Ia (strain ATCC 27591 / A909 / CDC SS700).